Here is a 497-residue protein sequence, read N- to C-terminus: Probable malate:quinone oxidoreductase (497 aa).

Belongs to the MQO family. The cofactor is FAD.

It carries out the reaction (S)-malate + a quinone = a quinol + oxaloacetate. The protein operates within carbohydrate metabolism; tricarboxylic acid cycle; oxaloacetate from (S)-malate (quinone route): step 1/1. The sequence is that of Probable malate:quinone oxidoreductase from Tolumonas auensis (strain DSM 9187 / NBRC 110442 / TA 4).